A 458-amino-acid polypeptide reads, in one-letter code: MTLLTHVLACLFGMGSWVAINGIWVELPLIVPEIPEGWYLPSYLTVLIQMANVGPLFVTLMHRFRPGKLDERPVIYSIVGLGVVATFLLAFFWKHTVPLAGATHSVPLLVLCFLLSVVDCTSSVTFLPFMMRLGPQYLTTYFVGEGVSGLVPAVVALVQGVGVVHCRNATVASLANGTLGVNSTVGASGELQAQYQPANFSAQVFFLFLSAMMVVCLAAFLLLNHHPAVAREKKCEQYFNGGLAEEKSDQALSLSHRPQEEKPMISSPDSHRRARQSSFGTGFYSGPELAFIFVVLAWVNALTNAVLPSVQSYSCLPYGNQAYHLAATMAAVANPVACFIAMFLPLRSLVLIGLLTIVGTGFGTYIMAMATLSPCPLLVHSASGTTLIVIAWVLFVLTLSYVKVIIGVILRDEGHSALVWCGAVVQLGSMLGALSMFPLVSVYGLFKSGDPCNTKCTK.

The next 5 helical transmembrane spans lie at 11-31 (LFGM…PLIV), 38-58 (WYLP…PLFV), 73-93 (PVIY…AFFW), 97-117 (VPLA…LLSV), and 146-166 (GVSG…VVHC). 4 N-linked (GlcNAc...) asparagine glycosylation sites follow: Asn168, Asn176, Asn182, and Asn199. Residues 204 to 224 (VFFLFLSAMMVVCLAAFLLLN) traverse the membrane as a helical segment. The disordered stretch occupies residues 249 to 274 (DQALSLSHRPQEEKPMISSPDSHRRA). The next 5 helical transmembrane spans lie at 279-299 (FGTG…LAWV), 325-345 (LAAT…MFLP), 349-369 (LVLI…IMAM), 388-408 (IVIA…IIGV), and 417-437 (ALVW…LSMF).

This sequence belongs to the riboflavin transporter family.

It is found in the cell membrane. The enzyme catalyses riboflavin(in) = riboflavin(out). In terms of biological role, plasma membrane transporter mediating the uptake by cells of the water soluble vitamin B2/riboflavin that plays a key role in biochemical oxidation-reduction reactions of the carbohydrate, lipid, and amino acid metabolism. The polypeptide is Riboflavin transporter 2 (rft2) (Salmo salar (Atlantic salmon)).